The sequence spans 137 residues: Holo-[acyl-carrier-protein] synthase (137 aa).

The Mg(2+) site is built by Asp8 and Glu57.

This sequence belongs to the P-Pant transferase superfamily. AcpS family. Mg(2+) serves as cofactor.

The protein localises to the cytoplasm. It carries out the reaction apo-[ACP] + CoA = holo-[ACP] + adenosine 3',5'-bisphosphate + H(+). Functionally, transfers the 4'-phosphopantetheine moiety from coenzyme A to a Ser of acyl-carrier-protein. In Hyphomonas neptunium (strain ATCC 15444), this protein is Holo-[acyl-carrier-protein] synthase.